The primary structure comprises 995 residues: MSAQMEEPETLGKRKESESSKLRSDETPTPEPRTKRRSLKRACVHEVAVPNDYTPTKEETIHGTLDNPVFNGDMAKTYPFKLDPFQSVSVACLERKESILVSAHTSAGKTAVAEYAIAMAFRDKQRVIYTSPLKALSNQKYRELQHEFKDVGLMTGDVTLSPNASCLVMTTEILRAMLYRGSEVLKEVAWVIFDEIHYMKDRERGVVWEESIIFLPPAIKMVFLSATMSNATEFAEWICYLHKQPCHVVYTDFRPTPLQHYAFPMGGGGLYLVVDDNEQFREDSFVKMQDTFPKPKSNDGKKSANGKSGGRGAKGGGGPGDSDVYKIVKMIMERKFEPVIIFSFSRRECEQHALSMSKLDFNTDEEKEVVEQVFNNAMQCLNEEDRSLPAIELMLPLLQRGIAVHHSGLLPVIKELVELLFQEGLVKALFATETFAMGLNMPAKTVVFTAVKKWDGDSHRYIGSGEYIQMSGRAGRRGKDERGICIIMIDEQMEMNTLRDMMLGKPAPLLSTFRLSYYTILNLLSRAEGQFTAEHVIRHSFHQFQHEKALPDIGNKVSKLEEEAAILNASGEAEVAEYHNLQFDIAKHEKKLMSEIIRPERVLCFLDTGRLVKIREGGTDWGWGVVVNVVKNSSVGTGSASSHGGGYIVDTLLHCSTGFSENGAKPKPCPPRAGEKGEMHVVPVQLPLISALSRLRISVPSDLRPVEARQSILLALQELSSRFPLGFPKLHPVKDMNIQDTEIVDLVSQIEEVEQKLLAHPMHKSEDDQQIKSFQRKAEVNYEIQQLKSKMRDSQLQKFRDELKNRSRVLKKLGHIDADGVVQVKGRAACLIDTGDELLVTELMFNGTFNDLDHHQVAALASCFIPVDKSNEQVNLRNELTKPLQQLQDSARKIAEIQHECKLEIDVEEYVESTIRPFLMDVIYSWSKGASFAEIIQMTDIFEGSIIRSARRLDEFLNQLRAAAEAVGESSLESKFAAASESLRRGIMFANSLYL.

The segment at 1–42 is disordered; that stretch reads MSAQMEEPETLGKRKESESSKLRSDETPTPEPRTKRRSLKRA. An N-acetylserine modification is found at Ser2. The segment covering 10-26 has biased composition (basic and acidic residues); that stretch reads TLGKRKESESSKLRSDE. Residues 90 to 246 form the Helicase ATP-binding domain; sequence VACLERKESI…WICYLHKQPC (157 aa). 103–110 contacts ATP; sequence AHTSAGKT. Residues 194–197 carry the DEIH box motif; it reads DEIH. A disordered region spans residues 290–318; that stretch reads DTFPKPKSNDGKKSANGKSGGRGAKGGGG. The segment covering 307 to 318 has biased composition (gly residues); it reads KSGGRGAKGGGG. A Helicase C-terminal domain is found at 323–524; sequence DVYKIVKMIM…LSYYTILNLL (202 aa).

It belongs to the DExH box helicase family. SKI2 subfamily. As to expression, expressed in inflorescences, leaves, stems, and roots.

It is found in the nucleus. The protein resides in the nucleoplasm. The catalysed reaction is ATP + H2O = ADP + phosphate + H(+). Its function is as follows. ATP-dependent RNA helicase that associates with the RNA exosome complex, with the cap binding complex (CBC) and with the NEXT-like complex. Involved in the degradation of a large number of non-coding nuclear exosome substrates such as snoRNA and miRNA precursors, incompletely spliced mRNAs, and spurious transcripts produced from pseudogenes and intergenic regions. Involved in the maintenance of homeotic B and C gene expression in the reproductive whorls. Regulates floral organ spacing and identity, probably through the regulation of protein synthesis or mRNA degradation. This is DExH-box ATP-dependent RNA helicase DExH10 from Arabidopsis thaliana (Mouse-ear cress).